The primary structure comprises 559 residues: Apolipoprotein N-acyltransferase 2 (559 aa).

The next 6 helical transmembrane spans lie at 27–47, 53–73, 86–106, 114–134, 153–173, and 187–207; these read LAGSSVLGLGALVPLYVGFLL, HVACSYGLFVALVHACSSFWL, ASTVGYFFYALPFGVAFACIL, ACAFALVWTLWEWVKSTGILA, IADITGVWGLSFLIPLANACV, and VPVFRLWLLTGCLYCLCSLYG. One can recognise a CN hydrolase domain in the interval 221–507; that stretch reads LALAIVQQNA…SAVLHVPVYP (287 aa). The active-site Proton acceptor is glutamate 288. Lysine 358 is a catalytic residue. The active-site Nucleophile is the cysteine 416. Residues 519–539 traverse the membrane as a helical segment; that stretch reads WVIVLCALIFFAEGVRMAVHT.

It belongs to the CN hydrolase family. Apolipoprotein N-acyltransferase subfamily.

Its subcellular location is the cell inner membrane. The catalysed reaction is N-terminal S-1,2-diacyl-sn-glyceryl-L-cysteinyl-[lipoprotein] + a glycerophospholipid = N-acyl-S-1,2-diacyl-sn-glyceryl-L-cysteinyl-[lipoprotein] + a 2-acyl-sn-glycero-3-phospholipid + H(+). Its pathway is protein modification; lipoprotein biosynthesis (N-acyl transfer). Its function is as follows. Catalyzes the phospholipid dependent N-acylation of the N-terminal cysteine of apolipoprotein, the last step in lipoprotein maturation. The sequence is that of Apolipoprotein N-acyltransferase 2 from Treponema pallidum (strain Nichols).